The primary structure comprises 256 residues: Type II phosphatidylinositol 4,5-bisphosphate 4-phosphatase (256 aa).

Over residues 1-10 (MAADGIDERS) the composition is skewed to basic and acidic residues. The disordered stretch occupies residues 1–25 (MAADGIDERSPLISPSSGNVTPTAP). Residues 13–22 (ISPSSGNVTP) show a composition bias toward polar residues. C106 is an active-site residue. Positions 106–112 (CKDISRR) match the CX5R motif motif. 2 consecutive transmembrane segments (helical) span residues 191–211 (CCTYITMGMICIFIGVGLTVG) and 226–246 (WAVAYLVGLVCLVRACYWGAI).

The protein localises to the late endosome membrane. It localises to the lysosome membrane. The enzyme catalyses a 1,2-diacyl-sn-glycero-3-phospho-(1D-myo-inositol-4,5-bisphosphate) + H2O = a 1,2-diacyl-sn-glycero-3-phospho-(1D-myo-inositol-5-phosphate) + phosphate. Its function is as follows. Catalyzes the hydrolysis of phosphatidylinositol-4,5-bisphosphate (PtdIns-4,5-P2) to phosphatidylinositol-4-phosphate (PtdIns-4-P). This is Type II phosphatidylinositol 4,5-bisphosphate 4-phosphatase from Xenopus laevis (African clawed frog).